Reading from the N-terminus, the 569-residue chain is Oxygen-dependent choline dehydrogenase (569 aa).

9–38 contributes to the FAD binding site; the sequence is DYVIIGGGSAGSVLGNRLSEDKDKEVLVLE. The active-site Proton acceptor is H475.

Belongs to the GMC oxidoreductase family. It depends on FAD as a cofactor.

It catalyses the reaction choline + A = betaine aldehyde + AH2. The catalysed reaction is betaine aldehyde + NAD(+) + H2O = glycine betaine + NADH + 2 H(+). Its pathway is amine and polyamine biosynthesis; betaine biosynthesis via choline pathway; betaine aldehyde from choline (cytochrome c reductase route): step 1/1. Functionally, involved in the biosynthesis of the osmoprotectant glycine betaine. Catalyzes the oxidation of choline to betaine aldehyde and betaine aldehyde to glycine betaine at the same rate. The sequence is that of Oxygen-dependent choline dehydrogenase from Staphylococcus aureus (strain COL).